Here is a 405-residue protein sequence, read N- to C-terminus: Succinyl-CoA--L-malate CoA-transferase beta subunit (405 aa).

Asp-175 (nucleophile) is an active-site residue.

It belongs to the CoA-transferase III family. Forms a large complex composed of six heterodimers (alpha, beta).

The enzyme catalyses succinyl-CoA + (S)-malate = (S)-malyl-CoA + succinate. It carries out the reaction (3S)-citramalate + succinyl-CoA = (3S)-citramalyl-CoA + succinate. Functionally, involved in the 3-hydroxypropionate cycle used for autotrophic carbon dioxide fixation. Catalyzes the transfer of CoA moiety from succinyl-CoA to L-malate to yield L-malyl-CoA. In Chloroflexus aurantiacus (strain ATCC 29366 / DSM 635 / J-10-fl), this protein is Succinyl-CoA--L-malate CoA-transferase beta subunit (smtB).